Here is a 298-residue protein sequence, read N- to C-terminus: Lipoyl synthase 1 (298 aa).

[4Fe-4S] cluster is bound by residues Cys34, Cys39, Cys45, Cys60, Cys64, Cys67, and Ser274. The 218-residue stretch at 46–263 (FYQGTATFLM…RRLGESMGFL (218 aa)) folds into the Radical SAM core domain.

It belongs to the radical SAM superfamily. Lipoyl synthase family. [4Fe-4S] cluster is required as a cofactor.

It is found in the cytoplasm. It catalyses the reaction [[Fe-S] cluster scaffold protein carrying a second [4Fe-4S](2+) cluster] + N(6)-octanoyl-L-lysyl-[protein] + 2 oxidized [2Fe-2S]-[ferredoxin] + 2 S-adenosyl-L-methionine + 4 H(+) = [[Fe-S] cluster scaffold protein] + N(6)-[(R)-dihydrolipoyl]-L-lysyl-[protein] + 4 Fe(3+) + 2 hydrogen sulfide + 2 5'-deoxyadenosine + 2 L-methionine + 2 reduced [2Fe-2S]-[ferredoxin]. The protein operates within protein modification; protein lipoylation via endogenous pathway; protein N(6)-(lipoyl)lysine from octanoyl-[acyl-carrier-protein]: step 2/2. In terms of biological role, catalyzes the radical-mediated insertion of two sulfur atoms into the C-6 and C-8 positions of the octanoyl moiety bound to the lipoyl domains of lipoate-dependent enzymes, thereby converting the octanoylated domains into lipoylated derivatives. The polypeptide is Lipoyl synthase 1 (Thermosynechococcus vestitus (strain NIES-2133 / IAM M-273 / BP-1)).